The following is a 363-amino-acid chain: Ribonuclease P protein subunit p40 (363 aa).

In terms of assembly, component of nuclear RNase P and RNase MRP ribonucleoproteins. RNase P consists of a catalytic RNA moiety and about 10 protein subunits; POP1, POP4, POP5, POP7, RPP14, RPP21, RPP25, RPP30, RPP38 and RPP40. Within the RNase P complex, POP1, POP7 and RPP25 form the 'finger' subcomplex, POP5, RPP14, RPP40 and homodimeric RPP30 form the 'palm' subcomplex, and RPP21, POP4 and RPP38 form the 'wrist' subcomplex. All subunits of the RNase P complex interact with the catalytic RNA. Several subunits of RNase P are also part of the RNase MRP complex. RNase MRP consists of a catalytic RNA moiety and about 8 protein subunits; POP1, POP7, RPP25, RPP30, RPP38, RPP40 and possibly also POP4 and POP5.

Its subcellular location is the nucleus. It is found in the nucleolus. Component of ribonuclease P, a ribonucleoprotein complex that generates mature tRNA molecules by cleaving their 5'-ends. Also a component of the MRP ribonuclease complex, which cleaves pre-rRNA sequences. The sequence is that of Ribonuclease P protein subunit p40 (Rpp40) from Mus musculus (Mouse).